The primary structure comprises 184 residues: Probable DNA-directed RNA polymerase subunit delta (184 aa).

Residues 14–81 form the HTH HARE-type domain; it reads LSMIEVARAI…GENVWALRSW (68 aa). 2 disordered regions span residues 88–107 and 118–184; these read DEEV…KHHK and GDDD…DEDD. The segment covering 118–164 has biased composition (acidic residues); it reads GDDDIIDYDNDDPEDDDLDAATDDSDDDYSDDDSDYDEDNDDADDVL.

It belongs to the RpoE family. In terms of assembly, RNAP is composed of a core of 2 alpha, a beta and a beta' subunits. The core is associated with a delta subunit and one of several sigma factors.

Participates in both the initiation and recycling phases of transcription. In the presence of the delta subunit, RNAP displays an increased specificity of transcription, a decreased affinity for nucleic acids, and an increased efficiency of RNA synthesis because of enhanced recycling. In Lactobacillus acidophilus (strain ATCC 700396 / NCK56 / N2 / NCFM), this protein is Probable DNA-directed RNA polymerase subunit delta.